The chain runs to 130 residues: Glycine cleavage system H protein (130 aa).

One can recognise a Lipoyl-binding domain in the interval 24–106; the sequence is EYTVGITEHA…YHEGWLFRIK (83 aa). N6-lipoyllysine is present on Lys65.

It belongs to the GcvH family. As to quaternary structure, the glycine cleavage system is composed of four proteins: P, T, L and H. It depends on (R)-lipoate as a cofactor.

In terms of biological role, the glycine cleavage system catalyzes the degradation of glycine. The H protein shuttles the methylamine group of glycine from the P protein to the T protein. The chain is Glycine cleavage system H protein from Photorhabdus laumondii subsp. laumondii (strain DSM 15139 / CIP 105565 / TT01) (Photorhabdus luminescens subsp. laumondii).